Consider the following 120-residue polypeptide: Protein VraC (120 aa).

This is Protein VraC from Staphylococcus epidermidis (strain ATCC 12228 / FDA PCI 1200).